Reading from the N-terminus, the 183-residue chain is Thymidine kinase (183 aa).

An ATP-binding site is contributed by 11 to 18; the sequence is GPMFSGKT. The active-site Proton acceptor is the E89. Position 119 (F119) interacts with substrate. Residues C144 and C147 each contribute to the Zn(2+) site. Residue 163-167 participates in substrate binding; the sequence is VMDIG. Residues C176 and C179 each contribute to the Zn(2+) site.

It belongs to the thymidine kinase family.

It carries out the reaction thymidine + ATP = dTMP + ADP + H(+). The protein is Thymidine kinase (TK) of Vertebrata (FPV).